We begin with the raw amino-acid sequence, 428 residues long: UPF0229 protein YeaH (428 aa).

The span at 78-90 (GNDHFIQNDRIER) shows a compositional bias: basic and acidic residues. A disordered region spans residues 78–111 (GNDHFIQNDRIERPQGGGGGGSGSGQGQASQDGE). The segment covering 92-103 (QGGGGGGSGSGQ) has biased composition (gly residues).

This sequence belongs to the UPF0229 family.

The chain is UPF0229 protein YeaH from Salmonella heidelberg (strain SL476).